Here is a 267-residue protein sequence, read N- to C-terminus: Transcription factor LBX1 (267 aa).

Residues 1 to 21 (MTSKDEAKSSASSVEERRRNA) are compositionally biased toward basic and acidic residues. The interval 1–36 (MTSKDEAKSSASSVEERRRNALDLLPPPANSNKPLT) is disordered. The segment at residues 127–186 (RRKSRTAFTNHQIYELEKRFLYQKYLSPADRDQIAQQLGLTNAQVITWFQNRRAKLKRDL) is a DNA-binding region (homeobox). The interval 211–267 (SELEESGSERGNSRSRSPQLGLTSNHMPLSPSXPLTDQHASKECSEDEEDVEIDVDD) is disordered. The span at 228-237 (PQLGLTSNHM) shows a compositional bias: polar residues. The span at 255–267 (SEDEEDVEIDVDD) shows a compositional bias: acidic residues.

As to expression, expressed in all myoblasts that will populate body wall muscles as well as in a group of cells the migrate into the head.

It is found in the nucleus. Its function is as follows. Transcription factor that controls hypaxial muscle development by down-regulating myod1 and cdkn1b/p27, thereby allowing myoblasts to proliferate before the onset of terminal differentiation. This Xenopus laevis (African clawed frog) protein is Transcription factor LBX1.